A 251-amino-acid polypeptide reads, in one-letter code: tRNA-cytidine(32) 2-sulfurtransferase 2 (251 aa).

The PP-loop motif motif lies at 33–38 (SGGKDS). Residues cysteine 108, cysteine 111, and cysteine 199 each coordinate [4Fe-4S] cluster.

This sequence belongs to the TtcA family. In terms of assembly, homodimer. Requires Mg(2+) as cofactor. [4Fe-4S] cluster is required as a cofactor.

The protein resides in the cytoplasm. It catalyses the reaction cytidine(32) in tRNA + S-sulfanyl-L-cysteinyl-[cysteine desulfurase] + AH2 + ATP = 2-thiocytidine(32) in tRNA + L-cysteinyl-[cysteine desulfurase] + A + AMP + diphosphate + H(+). Its pathway is tRNA modification. Functionally, catalyzes the ATP-dependent 2-thiolation of cytidine in position 32 of tRNA, to form 2-thiocytidine (s(2)C32). The sulfur atoms are provided by the cysteine/cysteine desulfurase (IscS) system. In Francisella tularensis subsp. tularensis (strain FSC 198), this protein is tRNA-cytidine(32) 2-sulfurtransferase 2.